The following is a 1358-amino-acid chain: MIEPSEDSFETMMEHKNPSSKQMESSEGSSNTTEATSGSGVRGEAGPASGPAQEKKEPPSGPLQEMEELPTDLLQDMEEPSSGPRKEIEDPPNDLLQDLEESCNGSHQARGDPLSGASDRMKEASVNPSGAREEQEAHTDLKESGREETPQEQNQTEHSTAELMAMVRSIISLYFRMQDLKEQQRVAEEILIKGINAGQLPAPKHFSGDRREFHEFIVLCQLTLQSYPRMFYNDRLRVGYVINHLSGLALEWAKALLQENSPLIGDFPAFLEAMSEVFEYRQALRVAEEAMFTIRQGGRSATEYIDEFQSLVPILGWPDEVLQAHLCQGLNEEIRHYLFRVPQPDSLDSLIVLILQIEEKLAERRAMLRLPPEARPRNLTWIDSPAPERWMVSSWLPSEVHPDINRAHLFLLLMVRVNPYHSVAVQALVDSGADGNFMDEKFAQEHYVELYEKPYPQPVQSVDGSLIGNEPVWLYTEPLVCIHQNHQESIEFDIVPSPNFSVVLGIRWLRVHAPEVDWIKGRCTFHSPYCLKNCFRPPPPCIALERHGMSLLPGLPHPYSDLADVFNPKEADDETSDQPSSDGSDDLSESEPSELQQAGDSDHSETFYECPSTAPWEPVGARMQERARLQEEYWDLQDMLTNRQDYIQMIPELFDQLHGAEWFTKLELRGTIVEESVNGHRTEDVWKAAFGLELEEMKSYQPFALSPDPIIPQNVIHFILKDMLGFFVLSYGQEVLIYSMSQEEHLHHVRQVLVRFRHHNVYCSLDKSQFHRQTVEFLGFVVTPKGVKLNKNVMTIITGYPTPGSKLSLRNFIEFVFPYRHFVERFSIIAEPLVRQLLSSYQFYWGVEEQEAFECLKRAFRKAPLLHHPKPQNPFYLETGVTGTALHASLIQIDDQTGKRACCAFYSRNISPIEVEYSQAEMKILPIRAAFMVWCRYLENTEEPIMILLNTEDLASLNNDRLTVLLPGHWVFFFSHFNFDVMELPEQDGGRALPPVRNLRWRRAFQRNTAARQTLLLASRGFPRDPSTESGEEENEEQDELNEQILRQELLAMIPIDQILNSFLAHFSMAQIRAVILHFFRGLLYWKNTLALAAILVLLRVRQCLSLRPAPAMRVARPQPQRSLRLILDSSLIAGSSITTAITQLLTQMPALVGANTIPAQELAELFLGPGRWQRNALHSQAHRGLQFTPGFWLTLCEFFGVRVTPQEGHLPALRQNRYLELHVVGDEDVVLREALQDDLQRYRQCGLHDGLQDTSQDKQDNDVQEAPPSHTAATHPPRPRHLMDPQVLEFLGSRLLHIHSADGQLHLLSREQAARALSQFLTLIYRRALPIPAWESQPREQARLEELPDEDEDANLD.

Disordered stretches follow at residues 1–159 (MIEP…TEHS) and 563–616 (ADVF…TAPW). The segment covering 19–30 (SSKQMESSEGSS) has biased composition (low complexity). The span at 65 to 79 (EMEELPTDLLQDMEE) shows a compositional bias: acidic residues. The segment covering 131–149 (AREEQEAHTDLKESGREET) has biased composition (basic and acidic residues). Residues 583-592 (GSDDLSESEP) show a composition bias toward acidic residues. The next 2 helical transmembrane spans lie at 1083–1099 (LLYW…LVLL) and 1126–1146 (LILD…TQLL). 2 disordered regions span residues 1250 to 1283 (DGLQ…PRHL) and 1338 to 1358 (QPRE…ANLD). Residues 1267–1276 (APPSHTAATH) are compositionally biased toward low complexity. A compositionally biased stretch (basic and acidic residues) spans 1338-1347 (QPREQARLEE). The segment covering 1348 to 1358 (LPDEDEDANLD) has biased composition (acidic residues).

Its subcellular location is the membrane. Plays an essential role in capillaries endothelial cells for the maintenance of feto-maternal interface and for development of the placenta. The sequence is that of Retrotransposon-like protein 1 (RTL1) from Homo sapiens (Human).